Consider the following 494-residue polypeptide: 4-trimethylaminobutyraldehyde dehydrogenase (494 aa).

At Ser-2 the chain carries N-acetylserine. Lys-30 carries the N6-acetyllysine; alternate modification. Lys-30 is modified (N6-succinyllysine; alternate). N6-succinyllysine is present on Lys-59. NAD(+)-binding positions include Lys-180 and 232 to 236 (GSVPT). Catalysis depends on Glu-254, which acts as the Proton acceptor. Residue Cys-288 is the Nucleophile of the active site. N6-acetyllysine is present on residues Lys-298 and Lys-344. Glu-391 is an NAD(+) binding site.

Belongs to the aldehyde dehydrogenase family. In terms of assembly, homotetramer.

It localises to the cytoplasm. Its subcellular location is the cytosol. The enzyme catalyses 4-(trimethylamino)butanal + NAD(+) + H2O = 4-(trimethylamino)butanoate + NADH + 2 H(+). It catalyses the reaction an aldehyde + NAD(+) + H2O = a carboxylate + NADH + 2 H(+). It carries out the reaction 4-aminobutanal + NAD(+) + H2O = 4-aminobutanoate + NADH + 2 H(+). The catalysed reaction is formaldehyde + NAD(+) + H2O = formate + NADH + 2 H(+). The enzyme catalyses acetaldehyde + NAD(+) + H2O = acetate + NADH + 2 H(+). It catalyses the reaction imidazole-4-acetaldehyde + NAD(+) + H2O = imidazole-4-acetate + NADH + 2 H(+). It carries out the reaction acrolein + NAD(+) + H2O = acrylate + NADH + 2 H(+). The catalysed reaction is (5-hydroxyindol-3-yl)acetaldehyde + NAD(+) + H2O = (5-hydroxyindol-3-yl)acetate + NADH + 2 H(+). The enzyme catalyses 3,4-dihydroxyphenylacetaldehyde + NAD(+) + H2O = 3,4-dihydroxyphenylacetate + NADH + 2 H(+). It catalyses the reaction spermine monoaldehyde + NAD(+) + H2O = N-(2-carboxyethyl)spermidine + NADH + 2 H(+). It carries out the reaction propanal + NAD(+) + H2O = propanoate + NADH + 2 H(+). The catalysed reaction is butanal + NAD(+) + H2O = butanoate + NADH + 2 H(+). The enzyme catalyses pentanal + NAD(+) + H2O = pentanoate + NADH + 2 H(+). It catalyses the reaction hexanal + NAD(+) + H2O = hexanoate + NADH + 2 H(+). It participates in amine and polyamine biosynthesis; carnitine biosynthesis. Converts gamma-trimethylaminobutyraldehyde into gamma-butyrobetaine with high efficiency (in vitro). Can catalyze the irreversible oxidation of a broad range of aldehydes to the corresponding acids in an NAD-dependent reaction, but with low efficiency. Catalyzes the oxidation of aldehydes arising from biogenic amines and polyamines. This is 4-trimethylaminobutyraldehyde dehydrogenase (ALDH9A1) from Bos taurus (Bovine).